The primary structure comprises 157 residues: UPF0225 protein PMI1492 (157 aa).

The protein belongs to the UPF0225 family.

The sequence is that of UPF0225 protein PMI1492 from Proteus mirabilis (strain HI4320).